The primary structure comprises 334 residues: Tryptophan--tRNA ligase (334 aa).

Residues 12–14 (QPS) and 20–21 (GN) contribute to the ATP site. Residues 13-21 (PSGIPTLGN) carry the 'HIGH' region motif. An L-tryptophan-binding site is contributed by D136. ATP-binding positions include 148 to 150 (GKD), I187, and 196 to 200 (KMSKS). Residues 196-200 (KMSKS) carry the 'KMSKS' region motif.

It belongs to the class-I aminoacyl-tRNA synthetase family. In terms of assembly, homodimer.

The protein localises to the cytoplasm. The catalysed reaction is tRNA(Trp) + L-tryptophan + ATP = L-tryptophyl-tRNA(Trp) + AMP + diphosphate + H(+). Functionally, catalyzes the attachment of tryptophan to tRNA(Trp). This chain is Tryptophan--tRNA ligase, found in Wigglesworthia glossinidia brevipalpis.